The following is a 237-amino-acid chain: Leucyl/phenylalanyl-tRNA--protein transferase (237 aa).

It belongs to the L/F-transferase family.

The protein resides in the cytoplasm. The catalysed reaction is N-terminal L-lysyl-[protein] + L-leucyl-tRNA(Leu) = N-terminal L-leucyl-L-lysyl-[protein] + tRNA(Leu) + H(+). It carries out the reaction N-terminal L-arginyl-[protein] + L-leucyl-tRNA(Leu) = N-terminal L-leucyl-L-arginyl-[protein] + tRNA(Leu) + H(+). The enzyme catalyses L-phenylalanyl-tRNA(Phe) + an N-terminal L-alpha-aminoacyl-[protein] = an N-terminal L-phenylalanyl-L-alpha-aminoacyl-[protein] + tRNA(Phe). Functions in the N-end rule pathway of protein degradation where it conjugates Leu, Phe and, less efficiently, Met from aminoacyl-tRNAs to the N-termini of proteins containing an N-terminal arginine or lysine. The chain is Leucyl/phenylalanyl-tRNA--protein transferase from Shewanella baltica (strain OS185).